A 266-amino-acid polypeptide reads, in one-letter code: Large ribosomal subunit protein uL2m (266 aa).

Belongs to the universal ribosomal protein uL2 family.

It is found in the mitochondrion. This Dictyostelium citrinum (Slime mold) protein is Large ribosomal subunit protein uL2m (mrpl2).